The sequence spans 160 residues: Serine-protein kinase RsbW (160 aa).

This sequence belongs to the anti-sigma-factor family.

It carries out the reaction L-seryl-[protein] + ATP = O-phospho-L-seryl-[protein] + ADP + H(+). The enzyme catalyses L-threonyl-[protein] + ATP = O-phospho-L-threonyl-[protein] + ADP + H(+). Functionally, negative regulator of sigma-B activity. Phosphorylates and inactivates its specific antagonist protein, RsbV. Upon phosphorylation of RsbV, RsbW is released and binds to sigma-B, thereby blocking its ability to form an RNA polymerase holoenzyme (E-sigma-B). In Bacillus cereus (strain B4264), this protein is Serine-protein kinase RsbW.